The primary structure comprises 253 residues: Probable transcriptional regulatory protein slr0989 (253 aa).

Residues 1–22 (MGGRKWQSIKRQKARVDAQKGK) are disordered.

It belongs to the TACO1 family.

Its subcellular location is the cytoplasm. This chain is Probable transcriptional regulatory protein slr0989, found in Synechocystis sp. (strain ATCC 27184 / PCC 6803 / Kazusa).